We begin with the raw amino-acid sequence, 235 residues long: Isopentenyl-diphosphate Delta-isomerase I (235 aa).

Lysine 38 contributes to the substrate binding site. Mg(2+) contacts are provided by histidine 42 and histidine 54. One can recognise a Nudix hydrolase domain in the interval leucine 52–leucine 204. 2 residues coordinate substrate: arginine 73 and lysine 77. Residue cysteine 89 is part of the active site. Substrate is bound at residue serine 90. Mg(2+) contacts are provided by glutamate 149 and glutamate 151. The active site involves glutamate 151.

The protein belongs to the IPP isomerase type 1 family. The cofactor is Mg(2+).

The catalysed reaction is isopentenyl diphosphate = dimethylallyl diphosphate. Its pathway is isoprenoid biosynthesis; dimethylallyl diphosphate biosynthesis; dimethylallyl diphosphate from isopentenyl diphosphate: step 1/1. It participates in porphyrin-containing compound metabolism; chlorophyll biosynthesis. Catalyzes the 1,3-allylic rearrangement of the homoallylic substrate isopentenyl (IPP) to its highly electrophilic allylic isomer, dimethylallyl diphosphate (DMAPP). The chain is Isopentenyl-diphosphate Delta-isomerase I (IPI1) from Camptotheca acuminata (Happy tree).